Consider the following 439-residue polypeptide: Trigger factor (439 aa).

A PPIase FKBP-type domain is found at 175–260 (SDKLVIDYQN…VKSVYVMKGM (86 aa)).

This sequence belongs to the FKBP-type PPIase family. Tig subfamily.

The protein resides in the cytoplasm. The enzyme catalyses [protein]-peptidylproline (omega=180) = [protein]-peptidylproline (omega=0). Functionally, involved in protein export. Acts as a chaperone by maintaining the newly synthesized protein in an open conformation. Functions as a peptidyl-prolyl cis-trans isomerase. The sequence is that of Trigger factor from Ehrlichia chaffeensis (strain ATCC CRL-10679 / Arkansas).